We begin with the raw amino-acid sequence, 620 residues long: Carotenoid isomerooxygenase (620 aa).

H211, H267, and H337 together coordinate Fe cation. The tract at residues 440 to 459 (NGKQATAGEESPKRDAKRGR) is disordered. A compositionally biased stretch (basic and acidic residues) spans 449–459 (ESPKRDAKRGR). Residue H612 coordinates Fe cation.

This sequence belongs to the carotenoid oxygenase family. Fe(2+) serves as cofactor. Expression follows organogenesis of the larval Bolwig's organ (BO), which mediates larval photophobic behavior. In the adult, expression is restricted exclusively to the brain. Expressed in both neuronal cells and glia cells. Not active within photoreceptors. Active within neuronal cells within the central nervous system.

The catalysed reaction is all-trans-zeaxanthin + O2 = (3R)-11-cis-3-hydroxyretinal + (3R)-all-trans-3-hydroxyretinal. The protein operates within cofactor metabolism; retinol metabolism. Catalyzes the oxidative cleavage at the 15,15'-double bond of carotenoids and the simultaneous all-trans to 11-cis isomerization of one cleavage product. Carotenoids like 11-cis retinal can promote visual pigment biogenesis in the dark. Essential for the biosynthesis of the 3-hydroxyretinal chromophore of rhodopsin from zeaxanthin and for proper photoreceptor development. Also essential for larval light perception. In Drosophila melanogaster (Fruit fly), this protein is Carotenoid isomerooxygenase (ninaB).